A 415-amino-acid polypeptide reads, in one-letter code: Beta-1,4-glucuronyltransferase 1 (415 aa).

At 1-8 (MQMSYAIR) the chain is on the cytoplasmic side. The chain crosses the membrane as a helical; Signal-anchor for type II membrane protein span at residues 9-36 (CAFYQLLLAALMLVAMLQLLYLSLLSGL). Topologically, residues 37-415 (HGQEEQDQYF…AKYPNSPRRC (379 aa)) are lumenal. Residue Asn-204 is glycosylated (N-linked (GlcNAc...) asparagine). Asp-227 and Asp-229 together coordinate Mn(2+). N-linked (GlcNAc...) asparagine glycosylation is present at Asn-300.

This sequence belongs to the glycosyltransferase 49 family. Interacts with LARGE1 and LARGE2. The cofactor is Mn(2+). In terms of tissue distribution, in the adult, highly expressed in heart, brain, skeletal muscle and kidney and to a lesser extent in placenta, pancreas, spleen, prostate, testis, ovary, small intestine and colon. Very weak expression in lung, liver, thymus and peripheral blood leukocytes. In fetal highly expressed in brain and kidney and to a lesser extent in lung and liver.

Its subcellular location is the golgi apparatus membrane. It carries out the reaction 3-O-[beta-D-Xyl-(1-&gt;4)-Rib-ol-P-Rib-ol-P-3-beta-D-GalNAc-(1-&gt;3)-beta-D-GlcNAc-(1-&gt;4)-(O-6-P-alpha-D-Man)]-Thr-[protein] + UDP-alpha-D-glucuronate = 3-O-[beta-D-GlcA-(1-&gt;3)-beta-D-Xyl-(1-&gt;4)-Rib-ol-P-Rib-ol-P-3-beta-D-GalNAc-(1-&gt;3)-beta-D-GlcNAc-(1-&gt;4)-(O-6-P-alpha-D-Man)]-Thr-[protein] + UDP + H(+). It functions in the pathway protein modification; protein glycosylation. In terms of biological role, beta-1,4-glucuronyltransferase involved in O-mannosylation of alpha-dystroglycan (DAG1). Transfers a glucuronic acid (GlcA) residue onto a xylose (Xyl) acceptor to produce the glucuronyl-beta-1,4-xylose-beta disaccharide primer, which is further elongated by LARGE1, during synthesis of phosphorylated O-mannosyl glycan. Phosphorylated O-mannosyl glycan is a carbohydrate structure present in alpha-dystroglycan (DAG1), which is required for binding laminin G-like domain-containing extracellular proteins with high affinity. Required for axon guidance; via its function in O-mannosylation of alpha-dystroglycan (DAG1). This is Beta-1,4-glucuronyltransferase 1 from Homo sapiens (Human).